The chain runs to 1504 residues: DNA polymerase zeta catalytic subunit (1504 aa).

Cys-1398, Cys-1401, Cys-1414, and Cys-1417 together coordinate Zn(2+). A CysA-type zinc finger spans residues 1398 to 1417; it reads CCNCGEELTKICSLQLCDDC. Residues Cys-1446, Cys-1449, Cys-1468, and Cys-1473 each coordinate [4Fe-4S] cluster. The CysB motif signature appears at 1446 to 1473; it reads CRTCSYRYTSDAGIENDHIASKCNSYDC.

Belongs to the DNA polymerase type-B family. As to quaternary structure, forms DNA polymerase zeta with REV7. It depends on [4Fe-4S] cluster as a cofactor.

The protein localises to the mitochondrion. Its subcellular location is the nucleus. It carries out the reaction DNA(n) + a 2'-deoxyribonucleoside 5'-triphosphate = DNA(n+1) + diphosphate. Functionally, nonessential DNA polymerase. Required for DNA damage induced mutagenesis. Involved in DNA repair, mitochondrial DNA repair and translesion synthesis. Translesion synthesis in S.cerevisiae may use a specialized DNA polymerase that is not required for other DNA replicative processes. Has a role in the bypass of abasic (AP) sites. Highly inefficient in incorporating nucleotides opposite the AP site, but efficiently extends from nucleotides, particularly an A, inserted opposite the lesion. The sequence is that of DNA polymerase zeta catalytic subunit (REV3) from Saccharomyces cerevisiae (strain ATCC 204508 / S288c) (Baker's yeast).